The following is a 1013-amino-acid chain: Putative helicase mov-10-B.1 (1013 aa).

2 stretches are compositionally biased toward polar residues: residues 91-103 (QWSR…QNHA) and 113-123 (RPSTTRVSDPS). Residues 91-129 (QWSRPYRSQQNHATPHLNDAISRPSTTRVSDPSSVPEPE) form a disordered region. 550 to 557 (GPPGTGKT) serves as a coordination point for ATP. The short motif at 672 to 675 (DEAG) is the DEAG box element.

This sequence belongs to the DNA2/NAM7 helicase family. SDE3 subfamily.

The protein localises to the cytoplasm. It is found in the P-body. It carries out the reaction ATP + H2O = ADP + phosphate + H(+). In terms of biological role, probable RNA helicase. Required for RNA-mediated gene silencing by the RNA-induced silencing complex (RISC). Required for both miRNA-mediated translational repression and miRNA-mediated cleavage of complementary mRNAs by RISC. The chain is Putative helicase mov-10-B.1 (mov10b.1) from Danio rerio (Zebrafish).